The following is a 550-amino-acid chain: Glucose-6-phosphate isomerase 3 (550 aa).

The active-site Proton donor is glutamate 357. Residues histidine 388 and lysine 514 contribute to the active site.

The protein belongs to the GPI family.

Its subcellular location is the cytoplasm. It carries out the reaction alpha-D-glucose 6-phosphate = beta-D-fructose 6-phosphate. Its pathway is carbohydrate biosynthesis; gluconeogenesis. It functions in the pathway carbohydrate degradation; glycolysis; D-glyceraldehyde 3-phosphate and glycerone phosphate from D-glucose: step 2/4. Its function is as follows. Catalyzes the reversible isomerization of glucose-6-phosphate to fructose-6-phosphate. In Rhodococcus jostii (strain RHA1), this protein is Glucose-6-phosphate isomerase 3.